Consider the following 239-residue polypeptide: Endoglucanase A (239 aa).

A signal peptide spans 1–16 (MKLSMTLSLFAATAMG).

This sequence belongs to the glycosyl hydrolase 12 (cellulase H) family.

The catalysed reaction is Endohydrolysis of (1-&gt;4)-beta-D-glucosidic linkages in cellulose, lichenin and cereal beta-D-glucans.. Has carboxylmethylcellulase activity. The polypeptide is Endoglucanase A (cekA) (Aspergillus kawachii (strain NBRC 4308) (White koji mold)).